Reading from the N-terminus, the 96-residue chain is Prokineticin Bm8-b (96 aa).

Residues 1-19 (MKCFAQIVVLLLVIAFSHG) form the signal peptide. 4 disulfide bridges follow: C32-C50, C37-C78, C60-C86, and C80-C95.

The protein belongs to the AVIT (prokineticin) family. Expressed by the skin glands.

The protein localises to the secreted. In terms of biological role, potent agonist for both PKR1/PROKR1 and PKR2/PROKR2, and inducer of a potent and long-lasting hyperalgesia. Also potentiates capsaicin-induced TRPV1 current, when tested on DRG neurons. At subnanomolar concentrations, this protein both induces potent chemotaxis of macrophages and stimulates LPS-induced production of the pro-inflammatory cytokines IL-1 and IL-12. In vivo, potently stimulates the contraction of the guinea-pig gastrointestinal (GI) smooth muscle (nanomolar concentration). The sequence is that of Prokineticin Bm8-b from Bombina maxima (Giant fire-bellied toad).